Here is a 356-residue protein sequence, read N- to C-terminus: S-adenosylmethionine:tRNA ribosyltransferase-isomerase (356 aa).

The protein belongs to the QueA family. In terms of assembly, monomer.

It localises to the cytoplasm. The enzyme catalyses 7-aminomethyl-7-carbaguanosine(34) in tRNA + S-adenosyl-L-methionine = epoxyqueuosine(34) in tRNA + adenine + L-methionine + 2 H(+). Its pathway is tRNA modification; tRNA-queuosine biosynthesis. Transfers and isomerizes the ribose moiety from AdoMet to the 7-aminomethyl group of 7-deazaguanine (preQ1-tRNA) to give epoxyqueuosine (oQ-tRNA). The chain is S-adenosylmethionine:tRNA ribosyltransferase-isomerase from Xanthomonas euvesicatoria pv. vesicatoria (strain 85-10) (Xanthomonas campestris pv. vesicatoria).